Consider the following 546-residue polypeptide: CTP synthase (546 aa).

An amidoligase domain region spans residues 1–264; it reads MRYIVVTGGV…TKYIMKAMRL (264 aa). Ser12 serves as a coordination point for CTP. Position 12 (Ser12) interacts with UTP. ATP-binding positions include 13–18 and Asp70; that span reads GLGKGI. Residues Asp70 and Glu140 each coordinate Mg(2+). CTP contacts are provided by residues 147-149, 185-190, and Lys221; these read DIE and KTKPTQ. UTP is bound by residues 185 to 190 and Lys221; that span reads KTKPTQ. The 237-residue stretch at 298-534 folds into the Glutamine amidotransferase type-1 domain; it reads GSQCTDPMKD…VEAMKAQRLR (237 aa). Gly357 contributes to the L-glutamine binding site. Catalysis depends on Cys384, which acts as the Nucleophile; for glutamine hydrolysis. L-glutamine contacts are provided by residues 385-388, Glu408, and Arg464; that span reads FGMQ. Active-site residues include His507 and Glu509.

It belongs to the CTP synthase family. In terms of assembly, homotetramer.

It catalyses the reaction UTP + L-glutamine + ATP + H2O = CTP + L-glutamate + ADP + phosphate + 2 H(+). It carries out the reaction L-glutamine + H2O = L-glutamate + NH4(+). The enzyme catalyses UTP + NH4(+) + ATP = CTP + ADP + phosphate + 2 H(+). It participates in pyrimidine metabolism; CTP biosynthesis via de novo pathway; CTP from UDP: step 2/2. Allosterically activated by GTP, when glutamine is the substrate; GTP has no effect on the reaction when ammonia is the substrate. The allosteric effector GTP functions by stabilizing the protein conformation that binds the tetrahedral intermediate(s) formed during glutamine hydrolysis. Inhibited by the product CTP, via allosteric rather than competitive inhibition. Its function is as follows. Catalyzes the ATP-dependent amination of UTP to CTP with either L-glutamine or ammonia as the source of nitrogen. Regulates intracellular CTP levels through interactions with the four ribonucleotide triphosphates. In Methanothrix thermoacetophila (strain DSM 6194 / JCM 14653 / NBRC 101360 / PT) (Methanosaeta thermophila), this protein is CTP synthase.